A 453-amino-acid polypeptide reads, in one-letter code: Serine/threonine-protein phosphatase 2A 55 kDa regulatory subunit B delta isoform (453 aa).

4 WD repeats span residues 32–71 (AEADIISTVEFNYSGDLLATGDKGGRVVIFQREQENKGRA), 97–138 (EIEE…KRAE), 181–219 (AHTYHINSISVNSDHETYLSADDLRINLWHLEITDRSFN), and 230–270 (ELTE…LCDR). Phosphoserine is present on serine 285. WD repeat units follow at residues 289 to 327 (EIISSISDVKFSHSGRYMMTRDYLSVKVWDLNMEGRPVE), 344 to 385 (ENDC…DVTL), and 420 to 452 (DFNKKILHTAWHPMESIIAVAATNNLYIFQDKI). Tyrosine 305 carries the post-translational modification Phosphotyrosine. Threonine 308 carries the post-translational modification Phosphothreonine. Positions 385–406 (LEASRENSKPRASLKPRKVCSG) are disordered.

This sequence belongs to the phosphatase 2A regulatory subunit B family. As to quaternary structure, PP2A consists of a common heterodimeric core enzyme, composed of a 36 kDa catalytic subunit (subunit C) and a 65 kDa constant regulatory subunit (PR65 or subunit A), that associates with a variety of regulatory subunits. Proteins that associate with the core dimer include three families of regulatory subunits B (the R2/B/PR55/B55, R3/B''/PR72/PR130/PR59 and R5/B'/B56 families), the 48 kDa variable regulatory subunit, viral proteins, and cell signaling molecules. Interacts with ENSA (when phosphorylated at 'Ser-67') and ARPP19 (when phosphorylated at 'Ser-62'), leading to inhibit PP2A activity. Interacts with IER5. In terms of tissue distribution, widely expressed with high levels in brain, heart, placenta, skeletal muscle, testis, thymus and spleen.

Its subcellular location is the cytoplasm. Substrate-recognition subunit of protein phosphatase 2A (PP2A) that plays a key role in cell cycle by controlling mitosis entry and exit. Involved in chromosome clustering during late mitosis by mediating dephosphorylation of MKI67. The activity of PP2A complexes containing PPP2R2D (PR55-delta) fluctuate during the cell cycle: the activity is high in interphase and low in mitosis. This is Serine/threonine-protein phosphatase 2A 55 kDa regulatory subunit B delta isoform (Ppp2r2d) from Rattus norvegicus (Rat).